Here is a 332-residue protein sequence, read N- to C-terminus: 2,3-diketo-L-gulonate reductase (332 aa).

The Proton donor role is filled by His44. NAD(+)-binding positions include 168–174, 224–225, and 304–306; these read ITMVDMS, WK, and GHE.

This sequence belongs to the LDH2/MDH2 oxidoreductase family. DlgD subfamily. Homodimer.

It localises to the cytoplasm. The enzyme catalyses 3-dehydro-L-gulonate + NAD(+) = 2,3-dioxo-L-gulonate + NADH + H(+). The catalysed reaction is 3-dehydro-L-gulonate + NADP(+) = 2,3-dioxo-L-gulonate + NADPH + H(+). Functionally, catalyzes the reduction of 2,3-diketo-L-gulonate in the presence of NADH, to form 3-keto-L-gulonate. This chain is 2,3-diketo-L-gulonate reductase, found in Escherichia coli O17:K52:H18 (strain UMN026 / ExPEC).